Consider the following 144-residue polypeptide: Transcription antitermination protein NusB (144 aa).

The protein belongs to the NusB family.

Functionally, involved in transcription antitermination. Required for transcription of ribosomal RNA (rRNA) genes. Binds specifically to the boxA antiterminator sequence of the ribosomal RNA (rrn) operons. This chain is Transcription antitermination protein NusB, found in Histophilus somni (strain 129Pt) (Haemophilus somnus).